The sequence spans 430 residues: Target of rapamycin complex 1 subunit toc1 (430 aa).

Phosphoserine occurs at positions 204 and 399.

The target of rapamycin complex 1 (TORC1) is composed of at least mip1, pop3/wat1, tco89, toc1 and tor2.

The protein resides in the cytoplasm. In terms of biological role, component of TORC1, which regulates multiple cellular processes to control cell growth in response to environmental signals. Tor2 is essential for growth. Nutrient limitation and environmental stress signals cause inactivation of TORC1. Active TORC1 positively controls cell growth and ribosome biogenesis by regulating ribosomal protein gene expression. TORC1 negatively controls G1 cell-cycle arrest, sexual development and amino acid uptake. Represses mating, meiosis and sporulation efficiency by interfering with the functions of the transcription factor ste11 and the meiosis-promoting RNA-binding protein mei2. The chain is Target of rapamycin complex 1 subunit toc1 from Schizosaccharomyces pombe (strain 972 / ATCC 24843) (Fission yeast).